A 225-amino-acid polypeptide reads, in one-letter code: 2-C-methyl-D-erythritol 4-phosphate cytidylyltransferase (225 aa).

It belongs to the IspD/TarI cytidylyltransferase family. IspD subfamily.

The catalysed reaction is 2-C-methyl-D-erythritol 4-phosphate + CTP + H(+) = 4-CDP-2-C-methyl-D-erythritol + diphosphate. It participates in isoprenoid biosynthesis; isopentenyl diphosphate biosynthesis via DXP pathway; isopentenyl diphosphate from 1-deoxy-D-xylulose 5-phosphate: step 2/6. Functionally, catalyzes the formation of 4-diphosphocytidyl-2-C-methyl-D-erythritol from CTP and 2-C-methyl-D-erythritol 4-phosphate (MEP). In Clostridium perfringens (strain SM101 / Type A), this protein is 2-C-methyl-D-erythritol 4-phosphate cytidylyltransferase.